A 1020-amino-acid chain; its full sequence is MVLPTCPMAEFALPRHSAVMERLRRRIELCRRHHSTCEARYEAVSPERLELERQHTFALHQRCIQAKAKRAGKHRQPPAAATAPVAAPAPASAPAAARLDAADGPEHGRPVAHLHDTVKRSLDSAASPQNGDQPNGYGDLFPGHKKTRREAPLGVSVSANGLPPASPLGQPDKPSGGDTLQTAGKHSLGLDPINKKCLADSGIHLNGGSNSSEPFPLSLSKELKQEPVDDLPCMIAGAGGSVAQSNLMPDLNLNEQEWKELIEELNRSVPDEDMKDLFTEDFEEKKDPEPPGSATQTPLAQDINIKTEFSPAAFEQEQLGSPQVRAGSAGQTFLGASSAPVGTDSPSLGSSQTLFHTTSQPGVDNSSPNLMPASAQAQSAQRALTSVVLPSQGPGGASELSSAHQLQQIAAKQKREQMLQNPQQAAPAPGPGQLATWQQAGPSHSPLDVPYPMEKPASPSGYKQDFTNSKLLMMPGVNKSSPRPGGPYLQPSHSNLLSHQSPSNLNQNPVNNQGSVLDYGNTKPLSHYKADCGQGGPGSGQNKPALMAYLPQQLPHLSNEQNSLFLMKPKSGNMPFRSLVPPGQEQNPSSVPVAAPAASVGTQPTVSVASTHNSSPYLSSQQQAAVMKQHQLLLDQQKQREQQQQQLQQQQFLQRQHLLAEQEKQQFQRHLTRPPPQYQDPTQSTFPQQVGQFTGPSAAVPGMNNLGPSNSSCPRVFPQPGTLMSMGPGHAPVSSLPSSSGQQDRGVAQFTGSQSLPQNSLYGMASGLAQIVAQPPPQATSTHAHIPRQTNVGQNASTSAAYGQNSLGSASLSQQHSKGTLPPGLTKPQVPRVSAAMGSQNASWQHQGMPNLSSQTSGNSSVNPFTAAPSFHIQQAHLKLAGQQFSQAMPSRPMAPLSSAGAAGPMLPPVSAQQRNSAPASAPPQAAPQQGLPGLSPSGPELGAFGQSPTSQMSGRPGLHCAQAYPVRTMGQELPFAYSGQPGSSGLSSVAGHTDLIDSLLKNRTSEEWINELDDLLGSQ.

The tract at residues 1–97 (MVLPTCPMAE…PAPASAPAAA (97 aa)) is required for interaction with NOTCH proteins. Position 45 is a phosphoserine (S45). Positions 67 to 76 (KAKRAGKHRQ) are enriched in basic residues. The interval 67-191 (KAKRAGKHRQ…TAGKHSLGLD (125 aa)) is disordered. The span at 77–99 (PPAAATAPVAAPAPASAPAAARL) shows a compositional bias: low complexity. The span at 100–122 (DAADGPEHGRPVAHLHDTVKRSL) shows a compositional bias: basic and acidic residues. A compositionally biased stretch (polar residues) spans 124–133 (SAASPQNGDQ). A phosphoserine mark is found at S127, S310, S321, and S367. Disordered stretches follow at residues 335–522 (GASS…YGNT), 575–598 (PFRS…APAA), 663–686 (EKQQ…QSTF), 725–748 (SMGP…RGVA), 794–866 (QNAS…NPFT), and 888–959 (AMPS…RPGL). The segment covering 344-369 (DSPSLGSSQTLFHTTSQPGVDNSSPN) has biased composition (polar residues). Over residues 373 to 383 (ASAQAQSAQRA) the composition is skewed to low complexity. Residues 399 to 410 (ELSSAHQLQQIA) are compositionally biased toward polar residues. Low complexity predominate over residues 419–435 (LQNPQQAAPAPGPGQLA). A compositionally biased stretch (polar residues) spans 491–515 (PSHSNLLSHQSPSNLNQNPVNNQGS). Residues 588–598 (PSSVPVAAPAA) show a composition bias toward low complexity. A compositionally biased stretch (polar residues) spans 794–818 (QNASTSAAYGQNSLGSASLSQQHSK). K827 is subject to N6-acetyllysine. The segment covering 837–864 (MGSQNASWQHQGMPNLSSQTSGNSSVNP) has biased composition (polar residues). Over residues 911–920 (SAQQRNSAPA) the composition is skewed to low complexity. S1019 carries the post-translational modification Phosphoserine.

The protein belongs to the mastermind family. As to quaternary structure, interacts (via N-terminus) with NOTCH1, NOTCH2, NOTCH3 and NOTCH4 (via ankyrin repeat region). Interacts (via N-terminus) with p53 (via DNA-binding region). Forms a DNA-binding complex with Notch proteins and RBPSUH/RBP-J kappa/CBF1. Also binds CREBBP/CBP and CDK8. Forms a complex with PRAG1, NOTCH1 and MAML1, in a MAML1-dependent manner. In terms of tissue distribution, at E9.5, strongly expressed in the telencephalon, first branchial arch, forelimb buds and somites. By 10.5 dpc, continuously expressed in brain and spinal cord. Also expressed in first and second branchial arches and limb buds. By 11.5 dpc, expression in CNS is weak but increases in mesodermal tissues. At 14.5 dpc, detected in epithelial cells in trachea, esophagus and proximal and distal tubules of the developing lungs.

Its subcellular location is the nucleus speckle. Its function is as follows. Acts as a transcriptional coactivator for NOTCH proteins. Has been shown to amplify NOTCH-induced transcription of HES1. Enhances phosphorylation and proteolytic turnover of the NOTCH intracellular domain in the nucleus through interaction with CDK8. Binds to CREBBP/CBP which promotes nucleosome acetylation at NOTCH enhancers and activates transcription. Induces phosphorylation and localization of CREBBP to nuclear foci. Plays a role in hematopoietic development by regulating NOTCH-mediated lymphoid cell fate decisions. The chain is Mastermind-like protein 1 from Mus musculus (Mouse).